A 1687-amino-acid polypeptide reads, in one-letter code: Genome polyprotein (1687 aa).

Over residues 1–13 the composition is skewed to polar residues; the sequence is MRMATPSSAPSVR. The disordered stretch occupies residues 1–56; sequence MRMATPSSAPSVRNTEKRKNKKASSKASVSFGAPSPLSSESEDEINYMTPPEQEAQ. The interaction with host MAP1LC3A/LC3 stretch occupies residues 1 to 116; the sequence is MRMATPSSAP…FRRYPHLRPK (116 aa). The interaction with NTPase stretch occupies residues 117 to 341; it reads EDRPDAPSHA…ISIFGEWQAE (225 aa). Residues 244–341 are interaction with NS4; the sequence is SPVQDWNVDP…ISIFGEWQAE (98 aa). Host ER membrane association regions lie at residues 261–292 and 302–341; these read KLRM…KPLN and WTFS…WQAE. The segment at 342 to 518 is interaction with NS1-2, NS4 and homooligomerization; that stretch reads GPFDLALDVV…GKTCFCQNLA (177 aa). One can recognise an SF3 helicase domain in the interval 476 to 641; that stretch reads RISMARAAFE…DDARARAPGD (166 aa). 504 to 511 provides a ligand contact to ATP; it reads GRPGIGKT. An important for mitochondrion targeting region spans residues 595–700; sequence VIIITTNQQT…AVALVHERHD (106 aa). The segment at 893 to 898 is acidic; the sequence is DEEYDE. Y896 carries the O-(5'-phospho-RNA)-tyrosine modification. The tract at residues 978–994 is interaction with host EIF4G; that stretch reads WADDDRQVDYGEKINFE. Residues 995–1172 enclose the Peptidase C37 domain; sequence APVSIWSRVV…AATHGEPTLE (178 aa). Residues H1024, D1048, and C1133 each act as for 3CLpro activity in the active site. One can recognise a RdRp catalytic domain in the interval 1416–1537; sequence RYHMDADYTR…STNLELDMVK (122 aa). Residues D1420 and D1422 each contribute to the Mg(2+) site. C1482 and C1484 are joined by a disulfide. Mg(2+) is bound by residues D1524, E1525, and S1569.

Homodimer. Interacts with NTPase; this interaction increases the proapoptotic activity of the NTPase and is crucial for the formation of the viral replication complex. Interacts with NS4; this interaction is crucial for the formation of the viral replication complex. Interacts (via N-terminus) with host VAPA. Interacts with host VAPB. In terms of assembly, monomer. As to quaternary structure, homooligomer. Interacts with NS1-2; this interaction increases the proapoptotic activity of the NTPase and is crucial for the formation of the viral replication complex. Interacts with NS4; this interaction increases the proapoptotic activity of the NTPase. Interacts with host G3BP1; this interaction leads to the redistribution of G3BP1 and its cellular partners to the viral replication complexes, thereby preventing the assembly of stress granules. Homodimer. Monomer; in solution. In terms of assembly, interacts with NTPase; this interaction increases the proapoptotic activity of the NTPase. Interacts with NS1-2; this interaction is crucial for the formation of the viral replication complex. As to quaternary structure, monomer. Interacts with the RNA-directed RNA polymerase; this interaction induces the multimerization of the RdRp and enhances its activity. Interacts with host IEF4E; this interaction plays a role in translation of viral proteins. Interacts (via C-terminus) with host IEF4G1 (via central domain); this interaction plays a role in translation of viral proteins. Homohexamer; also forms fibrous hexameric oligomer. Interacts with the viral genome-linked protein; this interaction induces the multimerization of the RdRp and enhances its activity. Mg(2+) is required as a cofactor. Mn(2+) serves as cofactor. Post-translationally, specific enzymatic cleavages in vivo yield mature proteins. 3CLpro is first autocatalytically cleaved, then processes the whole polyprotein. Cleaved by host CASP3/caspase 3 at 18-22 h.p.i. The cleavage allows NS1 secretion, which is essential for intestinal infection and resistance to IFN-lambda. In terms of processing, VPg is uridylylated by the polymerase and is covalently attached to the 5'-end of the polyadenylated genomic and subgenomic RNAs. This uridylylated form acts as a nucleotide-peptide primer for the polymerase.

The protein localises to the host endoplasmic reticulum membrane. Its subcellular location is the secreted. It localises to the host endosome membrane. The protein resides in the host mitochondrion. It is found in the host cytoplasm. The protein localises to the host perinuclear region. The catalysed reaction is a ribonucleoside 5'-triphosphate + H2O = a ribonucleoside 5'-diphosphate + phosphate + H(+). It catalyses the reaction Endopeptidase with a preference for cleavage when the P1 position is occupied by Glu-|-Xaa and the P1' position is occupied by Gly-|-Yaa.. The enzyme catalyses RNA(n) + a ribonucleoside 5'-triphosphate = RNA(n+1) + diphosphate. With respect to regulation, inhibited by Suramin, Suramin-related compounds and NF023. Inhibited by PPNDS. Functionally, induces the proliferation of the host smooth ER membranes forming long tubular structures. These remodeled membranes probably form the viral factories that contain the replication complex. May play a role in viral replication by interacting with host VAPA, a vesicle-associated membrane protein that plays a role in SNARE-mediated vesicle fusion. This interaction may target replication complex to intracellular membranes. In terms of biological role, promotes intestinal tropism and persistent fecal shedding in strain CR6. This function requires Glu-94 and is present in persistant strains. Displays NTPase activity, but probably no helicase activity. Displays RNA chaperone-like activity and destabilizes dsRNA. Induces the formation of convoluted membranes derived from the host ER. These remodeled membranes probably form the viral factories that contain the replication complex. Initiates host cell death by targeting the mitochondrial outer membrane, leading to the permeabilization of mitochondria, programmed host cell death and viral egress. Externalization of host cardiolipin seems to be involved in the process. Probably plays a role in preventing the assembly of host stress granules. Its function is as follows. Probable key protein responsible for the formation of membrane alterations by the virus. Induces the formation of convoluted membranes derived from the host ER. These remodeled membranes probably form the viral factories that contain the replication complex. May play a role in targeting replication complex to intracellular membranes. Functionally, viral genome-linked protein is covalently linked to the 5'-end of the positive-strand, negative-strand genomic RNAs and subgenomic RNA. Acts as a genome-linked replication primer. May recruit ribosome to viral RNA thereby promoting viral proteins translation. Interacts with host translation initiation complex to allow the translation of viral proteins. Induces the formation of aggregates of RNA-directed RNA polymerase in the presence of RNA. Through its interaction with the viral RNA-directed RNA polymerase, plays a crucial role in enhancing the polymerase activity. In terms of biological role, processes the polyprotein. 3CLpro-RdRp is first released by autocleavage, then all other proteins are cleaved. May cleave host polyadenylate-binding protein thereby inhibiting cellular translation. Does not cleave host G3BP1. Replicates genomic and antigenomic RNA by recognizing replications specific signals. Also transcribes a subgenomic mRNA by initiating RNA synthesis internally on antigenomic RNA. This sgRNA codes for structural proteins. Catalyzes the covalent attachment VPg with viral RNAs. This chain is Genome polyprotein, found in Norovirus (isolate Mouse/NoV/United States/MNV1/2002/GV) (MNV-1).